The chain runs to 892 residues: MFSSRIWLLLAVTVGVCLAVPDLDEIKKNLRKHGPDYYKNQPKMNENTVRLLKVDYWFRTESMIYDDIDNKEKDPSTVIAGNFSFETLHHDVEGGMLGRFTLTQCNTDNCGNPSPIYIAFRQGGNNAEHILKASDESDATWNFLYAIVNTIYTPAEYGEGDEQTVDTIYGRCFVNFGRPEDKRFRRIIEKCDLGYGTNFTKFEGIESVQYDQDVWYTQNTKVDADIIMVDAIEMLAFKSPLHEKYGFTLESRTHVEITNRTRVFVTSYCNDTVPSAKCAEQAFGAVRVGGKLYEHVKIAQEQSNKLTKLIGTYRRHLQDMGDSHICEKHSLLYSQIAQEARLAKRQDWEAAIQYPENDHVLSLIASALGGVGTAESITTAREVLLTASPDYLDDLLFGISQSSSNNEKWHKQLMYWLGSLDKKSEEYWKVANTIATVLNKRCEASTSSLNSCNKGKETIVNKFITDLTAGGVEVRVLEVLENIPIFGSYTFAKKFICETESEDVQKAALNVILAASKNLYETQLTHKLIKLFRNTCSQETPTSHSQLAIDILLKCVPDHQNVATLILRTETLNPDDQEKWHYLYKAIEASGNKDELKAEFWSRMRKFKVFRPNFLHRALQADSHVHWQEIADASNFQLFSTANTEFLQKSFKRSIFELSMKKGRKEHNLFSLSIDTEHLEQFVTGSASSRSGAPQGSVRIGVAGHKLPTHHIFKGSTDLLSTVWEADGRTHKAFEGHVPVRDVRLSVPLLSGLTLDVDSVGAISMRVLASAEVSLWNQRSNAKAEAYTSGSLHLTASLYHHSEPVRHVESTISALSTFTTDTRAIFETLPYDFCLRTSNSNVDINQKTVVQDQIGKHKKKTLNRKRVHPGVTYRLDDSTIRQCNSYLEQFRL.

The N-terminal stretch at 1–19 (MFSSRIWLLLAVTVGVCLA) is a signal peptide.

As to quaternary structure, heterodimer; heterodimerizes with protein disulfide isomerase.

The protein resides in the endoplasmic reticulum. In terms of biological role, catalyzes the transport of cholesteryl ester, and phospholipid between phospholipid surfaces. Does not catalyze transport of triglycerides. Required for the assembly and secretion of plasma lipoproteins that contain apolipoprotein B. Required for normal expression of klf-3. This Caenorhabditis elegans protein is Microsomal triglyceride transfer protein homolog.